Here is a 351-residue protein sequence, read N- to C-terminus: Large ribosomal subunit protein uL3 (351 aa).

Disordered regions lie at residues 1–31 and 246–271; these read MGHR…TPRT and KGSR…GQLG.

The protein belongs to the universal ribosomal protein uL3 family. In terms of assembly, part of the 50S ribosomal subunit. Forms a cluster with proteins L14 and L24e.

Functionally, one of the primary rRNA binding proteins, it binds directly near the 3'-end of the 23S rRNA, where it nucleates assembly of the 50S subunit. This chain is Large ribosomal subunit protein uL3, found in Saccharolobus islandicus (strain M.16.27) (Sulfolobus islandicus).